The primary structure comprises 642 residues: Arginine--tRNA ligase, chloroplastic/mitochondrial (642 aa).

A chloroplast and mitochondrion-targeting transit peptide spans 1–53 (MFIFPKDENRRETLTTKLRFSADHLTFTTVTEKLRATAWRFAFSSRAKSVVAM). Ala54 is subject to N-acetylalanine. The short motif at 190 to 201 (PNIAKEMHVGHL) is the 'HIGH' region element.

The protein belongs to the class-I aminoacyl-tRNA synthetase family.

It localises to the plastid. It is found in the chloroplast. Its subcellular location is the mitochondrion. The enzyme catalyses tRNA(Arg) + L-arginine + ATP = L-arginyl-tRNA(Arg) + AMP + diphosphate. Forms part of a macromolecular complex that catalyzes the attachment of specific amino acids to cognate tRNAs during protein synthesis. This is Arginine--tRNA ligase, chloroplastic/mitochondrial from Arabidopsis thaliana (Mouse-ear cress).